The sequence spans 344 residues: MNSSKPLDLSARNAARARQAVLTKPPGSLGQLEELACRFAAWQGRAQPEDLRPAITVFAADHGVTVEGVSAFPSAVTTEMVRNFANGGAAICVLARALDARLEVVDVGVAGDVSALPIVHAKVRPGSHNLARQAAMSAEETEAALEAGRAAARRAVEAGANLLVAGDMGIGNTTASAALICRLTGAAPELVVGRGTGVDDAGLANKRRAVKTALARVAWENLSGLDTLSELGGLEIAAIAGFYLEGARLGVPSLVDGFIASAAALCAKTIDPSLHDWLLASHRSAESGHELALTALQLHPLVDLGMRLGEGSGAAVCVPLLQLAVKLHNGMATFDEAGVSGKSA.

Glu310 (proton acceptor) is an active-site residue.

The protein belongs to the CobT family.

It carries out the reaction 5,6-dimethylbenzimidazole + nicotinate beta-D-ribonucleotide = alpha-ribazole 5'-phosphate + nicotinate + H(+). The protein operates within nucleoside biosynthesis; alpha-ribazole biosynthesis; alpha-ribazole from 5,6-dimethylbenzimidazole: step 1/2. Functionally, catalyzes the synthesis of alpha-ribazole-5'-phosphate from nicotinate mononucleotide (NAMN) and 5,6-dimethylbenzimidazole (DMB). This Chromobacterium violaceum (strain ATCC 12472 / DSM 30191 / JCM 1249 / CCUG 213 / NBRC 12614 / NCIMB 9131 / NCTC 9757 / MK) protein is Nicotinate-nucleotide--dimethylbenzimidazole phosphoribosyltransferase.